Consider the following 449-residue polypeptide: Nuclear hormone receptor family member nhr-43 (449 aa).

The segment at residues 44–122 is a DNA-binding region (nuclear receptor); it reads NIHCRVCERR…VGLNVDAVVG (79 aa). NR C4-type zinc fingers lie at residues 47–68 and 84–105; these read CRVCERRYDGSQHFGIDICRAC and CRRGTNKCELNTVSRKTTCQKC. Residues 125 to 142 are compositionally biased toward basic and acidic residues; the sequence is SPDHVKTTSRDESVKKED. The interval 125-154 is disordered; it reads SPDHVKTTSRDESVKKEDEESDTGSEGKSC. The region spanning 200 to 449 is the NR LBD domain; the sequence is NYNEFTKSRL…SDLNAYLYSI (250 aa).

Its subcellular location is the nucleus. Functionally, ligand-activated transcription factor. Positively modulates expression of homeobox protein lin-39, perhaps by binding to the sequence motif 5'-TGAC-3' in regulatory regions of the lin-39 gene, acting in the embryo, and also in the vulval lineage. The polypeptide is Nuclear hormone receptor family member nhr-43 (Caenorhabditis elegans).